Reading from the N-terminus, the 679-residue chain is Protein hook (679 aa).

The 118-residue stretch at 6–123 (NEMYYSLLEW…RLLQLVLGCA (118 aa)) folds into the Calponin-homology (CH) domain. 2 coiled-coil regions span residues 135 to 437 (EIMC…LKCG) and 480 to 574 (QTAL…QEIL).

The protein belongs to the hook family. As to quaternary structure, homodimer. Interacts with microtubules via its N-terminus.

It localises to the cytoplasm. The protein localises to the cytoskeleton. The protein resides in the endosome. Its subcellular location is the synapse. In terms of biological role, involved in endocytic trafficking by stabilizing organelles of the endocytic pathway. Probably acts as a cytoskeletal linker protein required to tether endosome vesicles to the cytoskeleton. Involved in modulation of endocytosis at stages required for down-regulation of membrane proteins that control synapse size. Not involved in synaptic vesicle recycling. Required in R7 cells for boss endocytosis into multivesicular bodies (MVBs). Has a role in regulating adult longevity. The polypeptide is Protein hook (Drosophila erecta (Fruit fly)).